The primary structure comprises 382 residues: Alanine racemase (382 aa).

Lys-39 (proton acceptor; specific for D-alanine) is an active-site residue. At Lys-39 the chain carries N6-(pyridoxal phosphate)lysine. Arg-138 is a binding site for substrate. The active-site Proton acceptor; specific for L-alanine is the Tyr-265. Met-312 contacts substrate.

This sequence belongs to the alanine racemase family. It depends on pyridoxal 5'-phosphate as a cofactor.

It catalyses the reaction L-alanine = D-alanine. The protein operates within amino-acid biosynthesis; D-alanine biosynthesis; D-alanine from L-alanine: step 1/1. Catalyzes the interconversion of L-alanine and D-alanine. May also act on other amino acids. The chain is Alanine racemase (alr) from Staphylococcus epidermidis (strain ATCC 35984 / DSM 28319 / BCRC 17069 / CCUG 31568 / BM 3577 / RP62A).